A 403-amino-acid polypeptide reads, in one-letter code: Phosphoglycerate kinase (403 aa).

Substrate is bound by residues 24–26 (DLN), Arg-39, 62–65 (HLGR), Arg-121, and Arg-161. ATP contacts are provided by residues Lys-211, Gly-299, Glu-330, and 359–362 (GGDS).

The protein belongs to the phosphoglycerate kinase family. Monomer.

Its subcellular location is the cytoplasm. The catalysed reaction is (2R)-3-phosphoglycerate + ATP = (2R)-3-phospho-glyceroyl phosphate + ADP. The protein operates within carbohydrate degradation; glycolysis; pyruvate from D-glyceraldehyde 3-phosphate: step 2/5. The protein is Phosphoglycerate kinase of Rhodococcus jostii (strain RHA1).